The sequence spans 186 residues: Translation initiation factor IF-3 (186 aa).

The protein belongs to the IF-3 family. As to quaternary structure, monomer.

It is found in the cytoplasm. In terms of biological role, IF-3 binds to the 30S ribosomal subunit and shifts the equilibrium between 70S ribosomes and their 50S and 30S subunits in favor of the free subunits, thus enhancing the availability of 30S subunits on which protein synthesis initiation begins. The protein is Translation initiation factor IF-3 of Borreliella burgdorferi (strain ATCC 35210 / DSM 4680 / CIP 102532 / B31) (Borrelia burgdorferi).